A 208-amino-acid chain; its full sequence is Uracil phosphoribosyltransferase (208 aa).

5-phospho-alpha-D-ribose 1-diphosphate contacts are provided by residues R78, R103, and D130–S138. Residues I193 and G198–A200 contribute to the uracil site. 5-phospho-alpha-D-ribose 1-diphosphate is bound at residue D199.

Belongs to the UPRTase family. It depends on Mg(2+) as a cofactor.

The catalysed reaction is UMP + diphosphate = 5-phospho-alpha-D-ribose 1-diphosphate + uracil. It participates in pyrimidine metabolism; UMP biosynthesis via salvage pathway; UMP from uracil: step 1/1. With respect to regulation, allosterically activated by GTP. Functionally, catalyzes the conversion of uracil and 5-phospho-alpha-D-ribose 1-diphosphate (PRPP) to UMP and diphosphate. This Neisseria gonorrhoeae (strain ATCC 700825 / FA 1090) protein is Uracil phosphoribosyltransferase.